The sequence spans 1098 residues: Bifunctional helicase and thymine dioxygenase JBP2 (1098 aa).

Residues 1-540 (MLNGLTRVST…PPLFVPTRLA (540 aa)) form a thymine dioxygenase region. Fe cation contacts are provided by histidine 415, aspartate 417, and histidine 465. Residue arginine 479 participates in 2-oxoglutarate binding. Residues 541 to 1098 (SHLAPVQLAA…RYQESVRESE (558 aa)) are DNA Helicase. In terms of domain architecture, Helicase ATP-binding spans 555–730 (VERTEKQSGC…YRLVGWVNKG (176 aa)). ATP is bound at residue 568 to 575 (MTMGLGKT). The short motif at 681-684 (DEGH) is the DEAH box element. Residues 897–1057 (VLVDIVLRVQ…ALPDELEDCA (161 aa)) enclose the Helicase C-terminal domain.

In the C-terminal section; belongs to the SNF2/RAD54 helicase family. This sequence in the N-terminal section; belongs to the TET family. JBP2 subfamily. Fe(2+) serves as cofactor.

It is found in the nucleus. It carries out the reaction ATP + H2O = ADP + phosphate + H(+). The catalysed reaction is thymine + 2-oxoglutarate + O2 = 5-hydroxymethyluracil + succinate + CO2. In terms of biological role, dioxygenase that catalyzes the first step of DNA base J (beta-d-glucosyl-HOMedU) biosynthesis by converting thymine to 5-hydroxymethyluracil (HOMedU). DNA base J is a hypermodified thymidine residue found in the genome of kinetoplastid parasites, which is localized primarily to repetitive DNA, namely the telomeres, and is implicated in the regulation of antigenic variation. Probably also acts as a DNA helicase. Recognizes and binds specific regions of the genome, hydrolyzes ATP and allows the DNA base J de novo synthesis. Involved in initial synthesis of DNA base J, JBP1 being able to act via the basal level of DNA base J and propagate further synthesis. In contrast to JBP1, it does not specifically bind DNA base J, however it binds chromatin. This Leishmania major protein is Bifunctional helicase and thymine dioxygenase JBP2 (JBP2).